We begin with the raw amino-acid sequence, 958 residues long: MEKTYDPQSIEQTLYQNWEEKGYFKPHGDASQGNYCIMIPPPNVTGSLHMGHAFQDTIMDTLIRYQRMKGKNTLWQVGTDHAGIATQMLVERKLEAEEGKSRHDLGRDVFMEKVWEWKAQSGGTITKQLRRMGASVDWDRERFTMDEGLSKAVQEVFVRLYEDDLIYRGKRLVNWDPKLHTAISDLEVENKEKQGHMWHLRYPLADGELTADGKDYLEVATTRPETMLGDSAVAVHPDDERYQALIGKYILLPIVNRRIPIVADDYVDMAFGTGCVKITPAHDFNDYEVGKRHKLPMFNVLTLDAAIRSSAEVVNTDGTINTSLDGSLPERYAGLDRFKARDAIVAEFETLGLLEKIAPHGLKVPYGDRSGVVIEPMLTDQWYVAVAPMAKTAIEAVENGDIKFVPQQYENMYFSWMRDIQDWCISRQLWWGHRIPAWYDTNGKVYVGRTEAEVRAKHDIDDAIALRQDEDVLDTWFSSALWTFSTLGWPDNVEDLKTFHPTDVLVTGFDIIFFWVARMIMMTMHFIKDEDGKPQVPFKTVYVTGLIRDEAGNKMSKSKGNVLDPLDMIDGIDLETLVEKRTGNMMQPQLAAKIEKSTRKEFENGIEAHGTDALRFTLAAMASTGRDINWDMKRLDGYRSFCNKLWNASRYVLMNTEGQDCGPNSPDYQGGEMELSLADRWIIDLFNQTVKTYDEHMASYRFDLAANTLYEFTWNQFCDWYLELTKPVLQNGTEAQMRGTRHTLVNVLEAMQRLMHPMMPYITETIWQRVKPLTGVQGDTIMLAPFPAFDAAKVDATAMADLEWVKQVIVAVRNIRAELNIAPSKPLNALLRGVSAQDKARIEANQAFFATLARLESMTILGEGETAPMSTTGLIGEMELLIPMAGLVDVAAEMARIDKQLEKLTQEIARIEGKLSNEGFVAKAPPAVIDKERAKMADLSRDIDKLTEQKAEFAKLEA.

The 'HIGH' region motif lies at 42–52 (PNVTGSLHMGH). Positions 554–558 (KMSKS) match the 'KMSKS' region motif. Lys-557 is a binding site for ATP. Positions 887–956 (LVDVAAEMAR…TEQKAEFAKL (70 aa)) form a coiled coil.

This sequence belongs to the class-I aminoacyl-tRNA synthetase family. ValS type 1 subfamily. Monomer.

It localises to the cytoplasm. The catalysed reaction is tRNA(Val) + L-valine + ATP = L-valyl-tRNA(Val) + AMP + diphosphate. Its function is as follows. Catalyzes the attachment of valine to tRNA(Val). As ValRS can inadvertently accommodate and process structurally similar amino acids such as threonine, to avoid such errors, it has a 'posttransfer' editing activity that hydrolyzes mischarged Thr-tRNA(Val) in a tRNA-dependent manner. The protein is Valine--tRNA ligase of Shewanella oneidensis (strain ATCC 700550 / JCM 31522 / CIP 106686 / LMG 19005 / NCIMB 14063 / MR-1).